The sequence spans 347 residues: Circulating cathodic antigen (347 aa).

Positions 76–109 form a coiled coil; sequence ICLAAENKQLEQLKIENKTLRNSLDEHQTALDMI. The segment at 149–177 is disordered; it reads PGPKSVNTPSTNSIDSQSVSQKSNSGKVD. Over residues 153 to 174 the composition is skewed to polar residues; sequence SVNTPSTNSIDSQSVSQKSNSG. Residues 206-233 adopt a coiled-coil conformation; it reads DAYATELEEELHRLRSENAGLREILMIS. Residues 303–332 form a disordered region; sequence LYNIPNPSDDSSNSGTISGNHSDEDSDEDD. The span at 307–316 shows a compositional bias: low complexity; that stretch reads PNPSDDSSNS.

This sequence belongs to the SIKE family. Post-translationally, O-glycosylated.

Its function is as follows. Involved in protection of the schistosome gut. The chain is Circulating cathodic antigen from Schistosoma mansoni (Blood fluke).